A 475-amino-acid polypeptide reads, in one-letter code: Ribulose bisphosphate carboxylase large chain (475 aa).

The propeptide occupies 1-2 (MS). Residue P3 is modified to N-acetylproline. K14 bears the N6,N6,N6-trimethyllysine mark. Substrate-binding residues include N123 and T173. Residue K175 is the Proton acceptor of the active site. Substrate is bound at residue K177. 3 residues coordinate Mg(2+): K201, D203, and E204. The residue at position 201 (K201) is an N6-carboxylysine. The active-site Proton acceptor is the H294. The substrate site is built by R295, H327, and S379.

Belongs to the RuBisCO large chain family. Type I subfamily. Heterohexadecamer of 8 large chains and 8 small chains; disulfide-linked. The disulfide link is formed within the large subunit homodimers. Mg(2+) is required as a cofactor. The disulfide bond which can form in the large chain dimeric partners within the hexadecamer appears to be associated with oxidative stress and protein turnover.

Its subcellular location is the plastid. It is found in the chloroplast. It carries out the reaction 2 (2R)-3-phosphoglycerate + 2 H(+) = D-ribulose 1,5-bisphosphate + CO2 + H2O. It catalyses the reaction D-ribulose 1,5-bisphosphate + O2 = 2-phosphoglycolate + (2R)-3-phosphoglycerate + 2 H(+). RuBisCO catalyzes two reactions: the carboxylation of D-ribulose 1,5-bisphosphate, the primary event in carbon dioxide fixation, as well as the oxidative fragmentation of the pentose substrate in the photorespiration process. Both reactions occur simultaneously and in competition at the same active site. The protein is Ribulose bisphosphate carboxylase large chain of Pinus thunbergii (Japanese black pine).